We begin with the raw amino-acid sequence, 283 residues long: Tropomyosin (283 aa).

Residues 1 to 283 are a coiled coil; sequence MDAIKKKMQA…LDSAFVELIL (283 aa).

This sequence belongs to the tropomyosin family. As to quaternary structure, homodimer.

In terms of biological role, tropomyosin, in association with the troponin complex, plays a central role in the calcium dependent regulation of muscle contraction. The protein is Tropomyosin of Locusta migratoria (Migratory locust).